Reading from the N-terminus, the 215-residue chain is Large ribosomal subunit protein bL25 (215 aa).

Residues 174–215 form a disordered region; the sequence is ETVVTVQPPATEKEEETEAAVTDSEPEVINEKEEPAEEAKEE. Over residues 186 to 215 the composition is skewed to acidic residues; it reads KEEETEAAVTDSEPEVINEKEEPAEEAKEE.

It belongs to the bacterial ribosomal protein bL25 family. CTC subfamily. Part of the 50S ribosomal subunit; part of the 5S rRNA/L5/L18/L25 subcomplex. Contacts the 5S rRNA. Binds to the 5S rRNA independently of L5 and L18.

Its function is as follows. This is one of the proteins that binds to the 5S RNA in the ribosome where it forms part of the central protuberance. The protein is Large ribosomal subunit protein bL25 of Halalkalibacterium halodurans (strain ATCC BAA-125 / DSM 18197 / FERM 7344 / JCM 9153 / C-125) (Bacillus halodurans).